The primary structure comprises 475 residues: MSFTEEETKLGKSLFEACSFTERPIAKDSHLETVRQVMRKNIPATITTSDLGLFTDEEEATKKKEIIQGDITIDGTTPLHVICSSFPSDATAEELEVALEMMRELFQWGAGWMLLDEQGQTPGCVAWDRSKAEARDSVLASVYNEIVSAGTRSEVFLRRINKSENVEFLSDDDDEEMDVDDDEEDESRDGEETGDIQQAIADAIKQAKEAGLEVVVDGETVEEVPELVGDKEDEKNNESAAQNEVDLAGSQMDYLKDKLTYTDDNKTLITTQNDGVMMDWEDEIMQKSADLLVSRADKESDGPVVLNVGFGLGIIDTYLQSKKPSKHYICEAHPDVLEKMEKDGWMDKPGVTVLVGRWQDTLPGLLSQGVYFDGMYYDTFSENYSDLVDFFDHVVGLLAPTGVFSFFNGLGADRQVCYDVYKNVVEVDLQEYGLNVEYQVIKVNKDVTGADGHVWDGIKRRYWVVEDFYLPVCTF.

The tract at residues 167–194 is disordered; it reads EFLSDDDDEEMDVDDDEEDESRDGEETG. The span at 169-194 shows a compositional bias: acidic residues; that stretch reads LSDDDDEEMDVDDDEEDESRDGEETG. The RMT2 domain maps to 247 to 475; sequence LAGSQMDYLK…EDFYLPVCTF (229 aa). S-adenosyl-L-methionine contacts are provided by residues tyrosine 254, methionine 285, 310-315, 331-333, 358-359, and aspartate 378; these read FGLGII, EAH, and WQ.

Belongs to the class I-like SAM-binding methyltransferase superfamily. RMT2 methyltransferase family. As to quaternary structure, monomer.

Its subcellular location is the cytoplasm. The protein resides in the nucleus. Functionally, S-adenosyl-L-methionine-dependent protein-arginine N-methyltransferase that methylates the delta-nitrogen atom of arginine residues to form N5-methylarginine (type IV) in target proteins. Monomethylates ribosomal protein L12. In Yarrowia lipolytica (strain CLIB 122 / E 150) (Yeast), this protein is Protein arginine N-methyltransferase 2.